The chain runs to 268 residues: Undecaprenyl-diphosphatase (268 aa).

8 helical membrane-spanning segments follow: residues 3-23 (FFNL…EFIP), 46-66 (FEVL…SAKL), 84-104 (LGVL…HGFI), 107-127 (VLFE…FILL), 144-164 (YPLP…IPGV), 185-205 (AEFS…YDLF), 213-233 (FNDG…GVFV), and 246-266 (FALF…ALII).

The protein belongs to the UppP family.

The protein localises to the cell inner membrane. The catalysed reaction is di-trans,octa-cis-undecaprenyl diphosphate + H2O = di-trans,octa-cis-undecaprenyl phosphate + phosphate + H(+). In terms of biological role, catalyzes the dephosphorylation of undecaprenyl diphosphate (UPP). Confers resistance to bacitracin. The chain is Undecaprenyl-diphosphatase from Brucella abortus (strain S19).